The chain runs to 499 residues: Pyruvate kinase 1 (499 aa).

Arginine 50 lines the substrate pocket. Positions 52, 54, 84, and 85 each coordinate K(+). Residue 52–55 (NFSH) coordinates ATP. ATP is bound at residue arginine 91. Residue glutamate 241 coordinates Mg(2+). Positions 264, 265, and 297 each coordinate substrate. Aspartate 265 serves as a coordination point for Mg(2+).

It belongs to the pyruvate kinase family. Homotetramer. Requires Mg(2+) as cofactor. It depends on K(+) as a cofactor.

It carries out the reaction pyruvate + ATP = phosphoenolpyruvate + ADP + H(+). Its pathway is carbohydrate degradation; glycolysis; pyruvate from D-glyceraldehyde 3-phosphate: step 5/5. With respect to regulation, activated by fructose 2,6-bisphosphate, activated by the effector in a cooperative manner. This Trypanosoma brucei brucei protein is Pyruvate kinase 1 (PYK1).